A 2346-amino-acid polypeptide reads, in one-letter code: Acetyl-CoA carboxylase 1 (2346 aa).

M1 carries the N-acetylmethionine modification. Phosphoserine occurs at positions 5, 23, 25, 29, 34, 48, 50, and 53. T58 carries the post-translational modification Phosphothreonine. S78 carries the post-translational modification Phosphoserine. Phosphoserine; by AMPK is present on S80. One can recognise a Biotin carboxylation domain in the interval 117-618 (VIEKVLIANN…DTGWLDRLIA (502 aa)). In terms of domain architecture, ATP-grasp spans 275 to 466 (SKRILNVPQE…LPAAQLQIAM (192 aa)). ATP is bound at residue 315–320 (GGGGKG). Positions 424, 437, and 439 each coordinate Mg(2+). Mn(2+)-binding residues include E424, E437, and N439. Residue R441 is part of the active site. A Phosphothreonine modification is found at T610. Positions 745–819 (FEKENDPSVL…DPGCVIAKMQ (75 aa)) constitute a Biotinyl-binding domain. Residue K786 is modified to N6-biotinyllysine. A phosphoserine mark is found at S835, S1201, S1216, and S1218. T1227 bears the Phosphothreonine mark. Phosphoserine is present on residues S1259, S1263, and S1273. Position 1334 is an N6-acetyllysine (K1334). One can recognise a CoA carboxyltransferase N-terminal domain in the interval 1576–1914 (PYVTKDLLQS…SVYSSVPLLN (339 aa)). Positions 1576–2234 (PYVTKDLLQS…EDLVKKKIHN (659 aa)) are carboxyltransferase. Positions 1823, 2127, and 2129 each coordinate CoA. Positions 1918 to 2234 (PIDRVIEFVP…EDLVKKKIHN (317 aa)) constitute a CoA carboxyltransferase C-terminal domain. T2153 carries the post-translational modification Phosphothreonine.

Monomer, homodimer, and homotetramer. Can form filamentous polymers. Interacts in its inactive phosphorylated form with the BRCT domains of BRCA1 which prevents ACACA dephosphorylation and inhibits lipid synthesis. Interacts with MID1IP1; interaction with MID1IP1 promotes oligomerization and increases its activity. It depends on Mg(2+) as a cofactor. The cofactor is Mn(2+). Biotin is required as a cofactor. In terms of processing, phosphorylation on Ser-1263 is required for interaction with BRCA1. Post-translationally, phosphorylation at Ser-80 by AMPK inactivates enzyme activity. The biotin cofactor is covalently attached to the central biotinyl-binding domain and is required for the catalytic activity. As to expression, expressed at high levels in mammary gland.

Its subcellular location is the cytoplasm. The protein resides in the cytosol. It carries out the reaction hydrogencarbonate + acetyl-CoA + ATP = malonyl-CoA + ADP + phosphate + H(+). It functions in the pathway lipid metabolism; malonyl-CoA biosynthesis; malonyl-CoA from acetyl-CoA: step 1/1. Inhibited by phosphorylation. Citrate promotes oligomerization of the protein into filaments that correspond to the most active form of the carboxylase. Cytosolic enzyme that catalyzes the carboxylation of acetyl-CoA to malonyl-CoA, the first and rate-limiting step of de novo fatty acid biosynthesis. This is a 2 steps reaction starting with the ATP-dependent carboxylation of the biotin carried by the biotin carboxyl carrier (BCC) domain followed by the transfer of the carboxyl group from carboxylated biotin to acetyl-CoA. The protein is Acetyl-CoA carboxylase 1 of Ovis aries (Sheep).